The primary structure comprises 311 residues: 4-hydroxyproline 2-epimerase (311 aa).

The active-site Proton acceptor is Cys-88. Substrate-binding positions include 89 to 90, His-208, and Asp-232; that span reads GH. Residue Cys-236 is the Proton donor of the active site. 237–238 is a substrate binding site; sequence GT.

This sequence belongs to the proline racemase family.

It catalyses the reaction trans-4-hydroxy-L-proline = cis-4-hydroxy-D-proline. In terms of biological role, catalyzes the epimerization of trans-4-hydroxy-L-proline (t4LHyp) to cis-4-hydroxy-D-proline (c4DHyp). Is likely involved in a degradation pathway that converts t4LHyp to alpha-ketoglutarate. Displays no proline racemase activity. In Chromohalobacter salexigens (strain ATCC BAA-138 / DSM 3043 / CIP 106854 / NCIMB 13768 / 1H11), this protein is 4-hydroxyproline 2-epimerase.